We begin with the raw amino-acid sequence, 441 residues long: Histidinol dehydrogenase homolog (441 aa).

Position 266 (H266) interacts with Zn(2+). Active-site proton acceptor residues include E334 and H335. Residue H427 participates in Zn(2+) binding.

The protein belongs to the histidinol dehydrogenase family. Zn(2+) is required as a cofactor.

The protein is Histidinol dehydrogenase homolog of Cereibacter sphaeroides (strain ATCC 17023 / DSM 158 / JCM 6121 / CCUG 31486 / LMG 2827 / NBRC 12203 / NCIMB 8253 / ATH 2.4.1.) (Rhodobacter sphaeroides).